A 119-amino-acid polypeptide reads, in one-letter code: Immunoglobulin lambda variable 4-69 (119 aa).

Positions 1–20 (MAWTPLLFLTLLLHCTGSLS) are cleaved as a signal peptide. The tract at residues 21–45 (QLVLTQSPSASASLGASVKLTCTLS) is framework-1. Residues 21-119 (QLVLTQSPSA…YYCQTWGTGI (99 aa)) enclose the Ig-like domain. Cysteines 42 and 112 form a disulfide. The tract at residues 46–52 (SGHSSYA) is complementarity-determining-1. The framework-2 stretch occupies residues 53–69 (IAWHQQQPEKGPRYLMK). The tract at residues 70-76 (LNSDGSH) is complementarity-determining-2. A disordered region spans residues 73–92 (DGSHSKGDGIPDRFSGSSSG). Residues 77 to 112 (SKGDGIPDRFSGSSSGAERYLTISSLQSEDEADYYC) are framework-3. Residues 113–119 (QTWGTGI) are complementarity-determining-3.

Immunoglobulins are composed of two identical heavy chains and two identical light chains; disulfide-linked.

The protein localises to the secreted. Its subcellular location is the cell membrane. Its function is as follows. V region of the variable domain of immunoglobulin light chains that participates in the antigen recognition. Immunoglobulins, also known as antibodies, are membrane-bound or secreted glycoproteins produced by B lymphocytes. In the recognition phase of humoral immunity, the membrane-bound immunoglobulins serve as receptors which, upon binding of a specific antigen, trigger the clonal expansion and differentiation of B lymphocytes into immunoglobulins-secreting plasma cells. Secreted immunoglobulins mediate the effector phase of humoral immunity, which results in the elimination of bound antigens. The antigen binding site is formed by the variable domain of one heavy chain, together with that of its associated light chain. Thus, each immunoglobulin has two antigen binding sites with remarkable affinity for a particular antigen. The variable domains are assembled by a process called V-(D)-J rearrangement and can then be subjected to somatic hypermutations which, after exposure to antigen and selection, allow affinity maturation for a particular antigen. The protein is Immunoglobulin lambda variable 4-69 of Homo sapiens (Human).